Reading from the N-terminus, the 580-residue chain is Protein O-linked-mannose beta-1,4-N-acetylglucosaminyltransferase 2 (580 aa).

Over 1–4 (MHLS) the chain is Cytoplasmic. A helical; Signal-anchor for type II membrane protein transmembrane segment spans residues 5-25 (AVFNALLVSVLAAVLWKHVRL). At 26–580 (REHAATLEEE…PFADVLVCNT (555 aa)) the chain is on the lumenal side. N99 and N276 each carry an N-linked (GlcNAc...) asparagine glycan. Positions 488–580 (ARCQASVHGA…PFADVLVCNT (93 aa)) constitute a Fibronectin type-III domain.

Belongs to the glycosyltransferase 61 family. In terms of tissue distribution, highly expressed in the brain, muscle, heart, and kidney in both fetus and adult. In the brain, highest expression in the cortex and cerebellum. Highly expressed in the pancreas.

The protein localises to the endoplasmic reticulum membrane. The catalysed reaction is 3-O-(alpha-D-mannosyl)-L-threonyl-[protein] + UDP-N-acetyl-alpha-D-glucosamine = 3-O-(N-acetyl-beta-D-glucosaminyl-(1-&gt;4)-alpha-D-mannosyl)-L-threonyl-[protein] + UDP + H(+). The protein operates within protein modification; protein glycosylation. Functionally, O-linked mannose beta-1,4-N-acetylglucosaminyltransferase that transfers UDP-N-acetyl-D-glucosamine to the 4-position of the mannose to generate N-acetyl-D-glucosamine-beta-1,4-O-D-mannosylprotein. Involved in the biosynthesis of the phosphorylated O-mannosyl trisaccharide (N-acetylgalactosamine-beta-3-N-acetylglucosamine-beta-4-(phosphate-6-)mannose), a carbohydrate structure present in alpha-dystroglycan (DAG1), which is required for binding laminin G-like domain-containing extracellular proteins with high affinity. The chain is Protein O-linked-mannose beta-1,4-N-acetylglucosaminyltransferase 2 (POMGNT2) from Homo sapiens (Human).